We begin with the raw amino-acid sequence, 412 residues long: Phosphoglycerate kinase (412 aa).

Substrate is bound by residues 24-26, Arg-40, 63-66, Arg-122, and Arg-162; these read DLN and HLGR. ATP contacts are provided by residues Lys-212, Gly-300, Glu-331, and 360–363; that span reads GGDS.

Belongs to the phosphoglycerate kinase family. In terms of assembly, monomer.

The protein resides in the cytoplasm. It carries out the reaction (2R)-3-phosphoglycerate + ATP = (2R)-3-phospho-glyceroyl phosphate + ADP. The protein operates within carbohydrate degradation; glycolysis; pyruvate from D-glyceraldehyde 3-phosphate: step 2/5. This chain is Phosphoglycerate kinase (pgk), found in Mycobacterium bovis (strain ATCC BAA-935 / AF2122/97).